A 365-amino-acid chain; its full sequence is Probable protein kinase At2g41970 (365 aa).

A disordered region spans residues M1–P50. The Protein kinase domain maps to F73–L354. ATP contacts are provided by residues I79–V87 and K100. Position 146 is a phosphotyrosine (Y146). The Proton acceptor role is filled by D204. Phosphoserine occurs at positions 208 and 238. Phosphothreonine is present on residues T239 and T244. Y252 is subject to Phosphotyrosine.

It belongs to the protein kinase superfamily. Tyr protein kinase family.

The sequence is that of Probable protein kinase At2g41970 from Arabidopsis thaliana (Mouse-ear cress).